Reading from the N-terminus, the 694-residue chain is Follicle-stimulating hormone receptor (694 aa).

Residues 1 to 17 (MALLLVSLLAFLSLGSG) form the signal peptide. 2 disulfide bridges follow: C18–C25 and C23–C32. An LRRNT domain is found at 18–46 (CHHRVCHCSNRVFLCQESKVTEIPSDLPR). Residues 18 to 365 (CHHRVCHCSN…EDIMGYDILR (348 aa)) lie on the Extracellular side of the membrane. LRR repeat units follow at residues 49–72 (LELR…FGDL), 73–97 (EKIE…LPKL), 98–118 (HEIR…AFQN), 119–143 (LPNL…KIQS), 144–169 (LQKV…MGLS), 170–192 (FEST…AFNG), 193–216 (TQLD…VFQG), 217–240 (ASGP…GLEN), and 241–259 (LKKL…PSLE). N-linked (GlcNAc...) asparagine glycosylation is found at N191 and N199. N268 carries an N-linked (GlcNAc...) asparagine glycan. 4 disulfides stabilise this stretch: C275-C345, C276-C292, C276-C355, and C292-C337. A glycan (N-linked (GlcNAc...) asparagine) is linked at N293. Y334 carries the post-translational modification Sulfotyrosine. The helical transmembrane segment at 366-386 (VLIWFISILAITGNIIVLVIL) threads the bilayer. At 387 to 397 (ITSQYKLTVPR) the chain is on the cytoplasmic side. A helical membrane pass occupies residues 398–420 (FLMCNLAFADLCIGIYLLLIASV). The Extracellular segment spans residues 421–442 (DIHTKSQYHNYAIDWQTGAGCD). C441 and C516 are oxidised to a cystine. A helical membrane pass occupies residues 443–464 (AAGFFTVFASELSVYTLTAITL). The Cytoplasmic segment spans residues 465–484 (ERWHTITHAMQLECKVQLRH). A helical transmembrane segment spans residues 485–507 (AASVMLVGWIFAFAVALLPIFGI). The Extracellular portion of the chain corresponds to 508-527 (STYMKVSICLPMDIDSPLSQ). Residues 528–549 (LYVMSLLVLNVLAFVVICGCYI) form a helical membrane-spanning segment. Over 550-572 (HIYLTVRNPNIVSSSSDTKIAKR) the chain is Cytoplasmic. A helical membrane pass occupies residues 573-596 (MAILIFTDFLCMAPISFFAISASL). The Extracellular portion of the chain corresponds to 597 to 607 (KVPLITVSKSK). The chain crosses the membrane as a helical span at residues 608-629 (ILLVLFYPINSCANPFLYAIFT). The Cytoplasmic segment spans residues 630–694 (KNFRRDFFIL…LVPLSHLAQN (65 aa)).

The protein belongs to the G-protein coupled receptor 1 family. FSH/LSH/TSH subfamily. Homotrimer. Functions as a homotrimer binding the FSH hormone heterodimer composed of CGA and FSHB. Interacts with ARRB2. Interacts with APPL2; interaction is independent of follicle stimulating hormone stimulation. N-glycosylated; indirectly required for FSH-binding, possibly via a conformational change that allows high affinity binding of hormone. In terms of processing, sulfated.

It is found in the cell membrane. Its function is as follows. G protein-coupled receptor for follitropin, the follicle-stimulating hormone. Through cAMP production activates the downstream PI3K-AKT and ERK1/ERK2 signaling pathways. This chain is Follicle-stimulating hormone receptor (FSHR), found in Equus caballus (Horse).